A 369-amino-acid polypeptide reads, in one-letter code: Cytoplasmic tRNA 2-thiolation protein 1 (369 aa).

It belongs to the TtcA family. CTU1/NCS6/ATPBD3 subfamily.

The protein resides in the cytoplasm. It participates in tRNA modification; 5-methoxycarbonylmethyl-2-thiouridine-tRNA biosynthesis. In terms of biological role, plays a central role in 2-thiolation of mcm(5)S(2)U at tRNA wobble positions of tRNA(Lys), tRNA(Glu) and tRNA(Gln). Directly binds tRNAs and probably acts by catalyzing adenylation of tRNAs, an intermediate required for 2-thiolation. It is unclear whether it acts as a sulfurtransferase that transfers sulfur from thiocarboxylated URM1 onto the uridine of tRNAs at wobble position. Prior mcm(5) tRNA modification by the elongator complex is required for 2-thiolation. May also be involved in protein urmylation. The chain is Cytoplasmic tRNA 2-thiolation protein 1 from Cryptococcus neoformans var. neoformans serotype D (strain JEC21 / ATCC MYA-565) (Filobasidiella neoformans).